The following is a 345-amino-acid chain: Eukaryotic translation initiation factor 3 subunit F (345 aa).

Residues 30 to 166 (VVIHPQALFS…TRAYISAPVG (137 aa)) form the MPN domain. Residues 308 to 345 (GGESGNAESGQRGGQRGGKGGRGGQQRTQDRSGEEARA) are disordered. Residues 318-331 (QRGGQRGGKGGRGG) are compositionally biased toward gly residues. The segment covering 335–345 (TQDRSGEEARA) has biased composition (basic and acidic residues).

This sequence belongs to the eIF-3 subunit F family. Component of the eukaryotic translation initiation factor 3 (eIF-3) complex.

The protein localises to the cytoplasm. Component of the eukaryotic translation initiation factor 3 (eIF-3) complex, which is involved in protein synthesis of a specialized repertoire of mRNAs and, together with other initiation factors, stimulates binding of mRNA and methionyl-tRNAi to the 40S ribosome. The eIF-3 complex specifically targets and initiates translation of a subset of mRNAs involved in cell proliferation. The protein is Eukaryotic translation initiation factor 3 subunit F of Aspergillus oryzae (strain ATCC 42149 / RIB 40) (Yellow koji mold).